We begin with the raw amino-acid sequence, 544 residues long: U1 small nuclear ribonucleoprotein component PRP42 (544 aa).

5 HAT repeats span residues 7–39 (LIHD…YIVK), 51–83 (QLLK…LEYK), 85–118 (GNVS…FCNN), 121–156 (SHQK…QISS), and 163–195 (KYWN…DIMD). Residues 230–235 (KKKLKK) carry the Nuclear localization signal motif. 4 HAT repeats span residues 255–288 (FESK…YTIT), 290–322 (QTDS…WLIN), 366–397 (NLLE…FKTF), and 456–488 (VEKN…LIYF).

As to quaternary structure, component of the 18S U1 snRNP particle, a subcomplex of the spliceosome.

Its subcellular location is the nucleus. Functionally, essential component of the U1 snRNP particle, which recognizes and binds the 5'-splice site of pre-mRNA. Together with other non-snRNP factors, U1 snRNP forms the spliceosomal commitment complex, that targets pre-mRNA to the splicing pathway. U1 snRNP is cotranscriptionally recruited to intron-containing genes. Required for U1 snRNP biogenesis. This is U1 small nuclear ribonucleoprotein component PRP42 (PRP42) from Saccharomyces cerevisiae (strain ATCC 204508 / S288c) (Baker's yeast).